Reading from the N-terminus, the 47-residue chain is Defensin-like protein 2 (47 aa).

4 disulfides stabilise this stretch: cysteine 5–cysteine 47, cysteine 16–cysteine 36, cysteine 22–cysteine 43, and cysteine 26–cysteine 45.

This sequence belongs to the DEFL family.

Its function is as follows. Fabatins have antibacterial activity against Gram-positive and Gram-negative bacteria. High activity against P.aeruginosa. No activity against S.cerevisiae and C.albicans. This Vicia faba (Broad bean) protein is Defensin-like protein 2.